Here is a 308-residue protein sequence, read N- to C-terminus: uncharacterized protein (308 aa).

In terms of domain architecture, ABC transporter spans 5–236 (LELQQLKKTY…LKSETFILDL (232 aa)). Position 38–45 (38–45 (GPNGAGKS)) interacts with ATP.

This sequence belongs to the ABC transporter superfamily.

This is an uncharacterized protein from Escherichia coli (strain K12).